The following is a 1226-amino-acid chain: Polyamine-transporting ATPase 13A3 (1226 aa).

At 1 to 28 (MDKEERKIINQGQEDEMEIYGYNLSRWK) the chain is on the cytoplasmic side. The stretch at 29–49 (LAIVSLGVICTGGFLLLLLYW) is an intramembrane region. The Cytoplasmic segment spans residues 50-205 (MPEWRVKATC…IAVKVPSVFK (156 aa)). Ser-98 is subject to Phosphoserine. A helical transmembrane segment spans residues 206-226 (LLIKEVLNPFYIFQLFSVILW). Residues 227–232 (STDEYY) are Lumenal-facing. Residues 233 to 253 (YYALAIVVMSIVSIVSSLYSI) traverse the membrane as a helical segment. Over 254–409 (RKQYVMLHDM…KPTDFKLYRD (156 aa)) the chain is Cytoplasmic. Residues 410 to 430 (AYLFLLCLVAVAGIGFIYTII) traverse the membrane as a helical segment. The Lumenal segment spans residues 431 to 448 (NSILNEVQVGVIIIESLD). A helical membrane pass occupies residues 449 to 469 (IITITVPPALPAAMTAGIVYA). Over 470 to 940 (QRRLKKIGIF…ALITSFCVFK (471 aa)) the chain is Cytoplasmic. The active-site 4-aspartylphosphate intermediate is Asp-498. Residues Asp-498 and Thr-500 each contribute to the Mg(2+) site. Residues 498–500 (DKT), Phe-628, Arg-684, and Asp-750 contribute to the ATP site. Phosphoserine is present on Ser-817. Residue Asp-883 coordinates Mg(2+). 883–887 (DGAND) contributes to the ATP binding site. Residues 941–961 (FMALYSIIQYFSVTLLYSILS) traverse the membrane as a helical segment. Residue Asn-962 is a topological domain, lumenal. The chain crosses the membrane as a helical span at residues 963 to 983 (LGDFQFLFIDLAIILVVVFTM). At 984–999 (SLNPAWKELVAQRPPS) the chain is on the cytoplasmic side. A helical transmembrane segment spans residues 1000–1020 (GLISGALLFSVLSQIIICIGF). At 1021–1073 (QSLGFFWVKQQPWYEVWHPKSDACNATGSLLWNSSHLDNETELDEHNIQNYEN) the chain is on the lumenal side. Residues 1074–1094 (TTVFFISSFQYLIVAIAFSKG) traverse the membrane as a helical segment. Topologically, residues 1095-1105 (KPFRQPCYKNY) are cytoplasmic. The chain crosses the membrane as a helical span at residues 1106 to 1126 (FFVFSVIFLYVFILFIMLYPV). The Lumenal portion of the chain corresponds to 1127–1143 (ASVDQVLQIVCVPYQWR). The chain crosses the membrane as a helical span at residues 1144 to 1164 (VTMLIIVLVNAFVSITVEESV). The Cytoplasmic portion of the chain corresponds to 1165–1226 (DRWRKCCLPW…NGSCQIITIT (62 aa)).

Belongs to the cation transport ATPase (P-type) (TC 3.A.3) family. Type V subfamily.

The protein resides in the recycling endosome membrane. Its subcellular location is the early endosome membrane. It localises to the late endosome membrane. It catalyses the reaction putrescine(out) + ATP + H2O = putrescine(in) + ADP + phosphate + H(+). Its function is as follows. ATP-driven pump involved in endocytosis-dependent polyamine transport. Uses ATP as an energy source to transfer polyamine precursor putrescine from the endosomal compartment to the cytosol. The chain is Polyamine-transporting ATPase 13A3 (ATP13A3) from Macaca fascicularis (Crab-eating macaque).